The following is a 206-amino-acid chain: Pyrrolidone-carboxylate peptidase (206 aa).

Residues glutamate 76, cysteine 139, and histidine 163 contribute to the active site.

It belongs to the peptidase C15 family. As to quaternary structure, homotetramer.

It is found in the cytoplasm. The catalysed reaction is Release of an N-terminal pyroglutamyl group from a polypeptide, the second amino acid generally not being Pro.. Its function is as follows. Removes 5-oxoproline from various penultimate amino acid residues except L-proline. This is Pyrrolidone-carboxylate peptidase (pcp) from Pyrococcus horikoshii (strain ATCC 700860 / DSM 12428 / JCM 9974 / NBRC 100139 / OT-3).